Reading from the N-terminus, the 292-residue chain is UPF0696 protein C11orf68 homolog (292 aa).

The segment covering Met1–Gly10 has biased composition (low complexity). The tract at residues Met1–Gly60 is disordered. Residues Glu35 to Pro44 show a composition bias toward basic and acidic residues.

This sequence belongs to the UPF0696 family.

This is UPF0696 protein C11orf68 homolog from Bos taurus (Bovine).